Reading from the N-terminus, the 236-residue chain is 1-(5-phosphoribosyl)-5-[(5-phosphoribosylamino)methylideneamino] imidazole-4-carboxamide isomerase (236 aa).

Aspartate 8 (proton acceptor) is an active-site residue. Aspartate 129 functions as the Proton donor in the catalytic mechanism.

The protein belongs to the HisA/HisF family.

Its subcellular location is the cytoplasm. It catalyses the reaction 1-(5-phospho-beta-D-ribosyl)-5-[(5-phospho-beta-D-ribosylamino)methylideneamino]imidazole-4-carboxamide = 5-[(5-phospho-1-deoxy-D-ribulos-1-ylimino)methylamino]-1-(5-phospho-beta-D-ribosyl)imidazole-4-carboxamide. It functions in the pathway amino-acid biosynthesis; L-histidine biosynthesis; L-histidine from 5-phospho-alpha-D-ribose 1-diphosphate: step 4/9. The protein is 1-(5-phosphoribosyl)-5-[(5-phosphoribosylamino)methylideneamino] imidazole-4-carboxamide isomerase of Methanocorpusculum labreanum (strain ATCC 43576 / DSM 4855 / Z).